A 99-amino-acid polypeptide reads, in one-letter code: Aspartyl/glutamyl-tRNA(Asn/Gln) amidotransferase subunit C (99 aa).

It belongs to the GatC family. As to quaternary structure, heterotrimer of A, B and C subunits.

The enzyme catalyses L-glutamyl-tRNA(Gln) + L-glutamine + ATP + H2O = L-glutaminyl-tRNA(Gln) + L-glutamate + ADP + phosphate + H(+). The catalysed reaction is L-aspartyl-tRNA(Asn) + L-glutamine + ATP + H2O = L-asparaginyl-tRNA(Asn) + L-glutamate + ADP + phosphate + 2 H(+). Allows the formation of correctly charged Asn-tRNA(Asn) or Gln-tRNA(Gln) through the transamidation of misacylated Asp-tRNA(Asn) or Glu-tRNA(Gln) in organisms which lack either or both of asparaginyl-tRNA or glutaminyl-tRNA synthetases. The reaction takes place in the presence of glutamine and ATP through an activated phospho-Asp-tRNA(Asn) or phospho-Glu-tRNA(Gln). The sequence is that of Aspartyl/glutamyl-tRNA(Asn/Gln) amidotransferase subunit C from Methylibium petroleiphilum (strain ATCC BAA-1232 / LMG 22953 / PM1).